The following is a 396-amino-acid chain: Maltose/maltodextrin-binding periplasmic protein (396 aa).

The first 26 residues, 1–26 (MKIKTGVGILALSALTTMMISAPALA), serve as a signal peptide directing secretion.

Belongs to the bacterial solute-binding protein 1 family. The complex is composed of two ATP-binding proteins (MalK), two transmembrane proteins (MalG and MalF) and a solute-binding protein (MalE).

It is found in the periplasm. In terms of biological role, part of the ABC transporter complex MalEFGK involved in maltose/maltodextrin import. Binds maltose and higher maltodextrins. The chain is Maltose/maltodextrin-binding periplasmic protein (malE) from Salmonella typhimurium (strain LT2 / SGSC1412 / ATCC 700720).